The sequence spans 340 residues: N-acetyl-gamma-glutamyl-phosphate reductase (340 aa).

Cys-146 is a catalytic residue.

This sequence belongs to the NAGSA dehydrogenase family. Type 1 subfamily.

Its subcellular location is the cytoplasm. The catalysed reaction is N-acetyl-L-glutamate 5-semialdehyde + phosphate + NADP(+) = N-acetyl-L-glutamyl 5-phosphate + NADPH + H(+). The protein operates within amino-acid biosynthesis; L-arginine biosynthesis; N(2)-acetyl-L-ornithine from L-glutamate: step 3/4. Its function is as follows. Catalyzes the NADPH-dependent reduction of N-acetyl-5-glutamyl phosphate to yield N-acetyl-L-glutamate 5-semialdehyde. This is N-acetyl-gamma-glutamyl-phosphate reductase from Streptococcus gordonii (strain Challis / ATCC 35105 / BCRC 15272 / CH1 / DL1 / V288).